We begin with the raw amino-acid sequence, 192 residues long: Small ribosomal subunit protein eS7 (192 aa).

The protein belongs to the eukaryotic ribosomal protein eS7 family.

This chain is Small ribosomal subunit protein eS7 (RpS7), found in Culex quinquefasciatus (Southern house mosquito).